Here is a 330-residue protein sequence, read N- to C-terminus: Virulence plasmid integrase pGP8-D (330 aa).

The 86-residue stretch at 39-124 (FSLFEVIMHW…SYISLTRFLN (86 aa)) folds into the Core-binding (CB) domain. One can recognise a Tyr recombinase domain in the interval 152-327 (VKTNAMNRLQ…SREDNASKKM (176 aa)). Catalysis depends on residues Arg-189, Lys-214, His-279, Arg-282, and His-305. Tyr-314 acts as the O-(3'-phospho-DNA)-tyrosine intermediate in catalysis.

The protein belongs to the 'phage' integrase family.

The sequence is that of Virulence plasmid integrase pGP8-D from Chlamydia muridarum (strain MoPn / Nigg).